Here is a 313-residue protein sequence, read N- to C-terminus: Ribosomal protein uL3 glutamine methyltransferase (313 aa).

The protein belongs to the protein N5-glutamine methyltransferase family. PrmB subfamily.

The catalysed reaction is L-glutaminyl-[ribosomal protein uL3] + S-adenosyl-L-methionine = N(5)-methyl-L-glutaminyl-[ribosomal protein uL3] + S-adenosyl-L-homocysteine + H(+). In terms of biological role, methylates large ribosomal subunit protein uL3 on a specific glutamine residue. This Pasteurella multocida (strain Pm70) protein is Ribosomal protein uL3 glutamine methyltransferase.